The sequence spans 312 residues: Nicotinamide adenine dinucleotide transporter 1, chloroplastic (312 aa).

3 Solcar repeats span residues 11 to 103 (KNVL…LKSF), 111 to 199 (LSVG…IKVY), and 211 to 299 (LNAR…VHRF). 6 helical membrane passes run 17–37 (AAAG…LDVI), 78–98 (GLSP…TMYD), 117–137 (VLAA…LWVV), 171–191 (GLYS…IQFP), 216–232 (VAVA…TLTY), and 271–293 (FYRG…FTSF).

The protein belongs to the mitochondrial carrier (TC 2.A.29) family. As to expression, highly expressed in young leaf mesophyll cells, root tips and at the branches of adventitious roots. Low expression in all flower tissues and not detected in siliques and seeds.

The protein localises to the plastid. It localises to the chloroplast membrane. Inhibited by pyridoxal 5'-phosphate, bathophenanthroline, tannic acid, mersalyl, mercuric chloride, p-hydroxymercuribenzoate, p-hydroxymercuribenzoate sulfonate, bromocresol purple and N-ethylmaleimide. In terms of biological role, mediates the NAD(+) import into chloroplast. Favors the NAD(+)(in)/ADP or AMP(out) antiport exchange, but is also able to catalyze a low unidirectional transport (uniport) of NAD(+). Transports NAD(+), nicotinic acid adenine dinucleotide, nicotinamide mononucleotide, nicotinic acid mononucleotide, FAD, FMN, TTP, TDP, TMP, UTP, UDP, UMP, CTP, CDP, CMP, GTP, GDP, GMP, 3'-AMP, ATP, ADP, and AMP, has low transport activity with cAMP, pyrophosphate, NADH and alpha-NAD(+), and has no activity with NADP(+), NADPH, nicotinamide, nicotinic acid, adenosine, thiamine mono- or diphosphate, inorganic phosphate, CoA, folate, NaCl, malate, malonate, citrate, fumarate, aspartate, glutamate, S-adenosylmethionine, lysine, arginine, and ornithine. The protein is Nicotinamide adenine dinucleotide transporter 1, chloroplastic (NDT1) of Arabidopsis thaliana (Mouse-ear cress).